Here is a 1161-residue protein sequence, read N- to C-terminus: PAN2-PAN3 deadenylation complex catalytic subunit pan2 (1161 aa).

2 WD repeats span residues 20 to 59 (GLPTAATTIAFDDVSELLWAGNEFGRITSFYGPELQRYTS) and 276 to 315 (ANVSFMLGIDISPSGEALAINDAECSIHLWGSPSKIHFNE). Positions 316 to 452 (MSKEVEFADV…GAKLNGEAED (137 aa)) are linker. Positions 453–822 (DPLLKYSNVE…SPCILAYQAK (370 aa)) constitute a USP domain. Residues 871–1049 (VALDTEFVDL…IEDARMALRL (179 aa)) enclose the Exonuclease domain. Positions 874, 876, 983, and 1042 each coordinate a divalent metal cation. Residues 1009 to 1060 (NRRLSLRYLAWAVFKEYIQEEPADNNQGHDSIEDARMALRLWKKFQEYEDAG) form a WD 4 repeat. Residues 1092-1161 (RPGTAVTMQN…GDFFGGSPLK (70 aa)) form a disordered region. The segment covering 1097–1110 (VTMQNSSGRNTPST) has biased composition (polar residues). A compositionally biased stretch (low complexity) spans 1116–1129 (AATATATTSAPATP). Residues 1145 to 1155 (TFGGPGAGDFF) show a composition bias toward gly residues.

The protein belongs to the peptidase C19 family. PAN2 subfamily. Forms a heterotrimer with an asymmetric homodimer of the regulatory subunit pan3 to form the poly(A)-nuclease (PAN) deadenylation complex. Requires a divalent metal cation as cofactor.

The protein resides in the cytoplasm. It catalyses the reaction Exonucleolytic cleavage of poly(A) to 5'-AMP.. Its activity is regulated as follows. Positively regulated by the regulatory subunit pan3. In terms of biological role, catalytic subunit of the poly(A)-nuclease (PAN) deadenylation complex, one of two cytoplasmic mRNA deadenylases involved in mRNA turnover. PAN specifically shortens poly(A) tails of RNA and the activity is stimulated by poly(A)-binding protein pab1. PAN deadenylation is followed by rapid degradation of the shortened mRNA tails by the CCR4-NOT complex. Deadenylated mRNAs are then degraded by two alternative mechanisms, namely exosome-mediated 3'-5' exonucleolytic degradation, or deadenylation-dependent mRNA decaping and subsequent 5'-3' exonucleolytic degradation by xrn1. May also be involved in post-transcriptional maturation of mRNA poly(A) tails. The sequence is that of PAN2-PAN3 deadenylation complex catalytic subunit pan2 from Neosartorya fischeri (strain ATCC 1020 / DSM 3700 / CBS 544.65 / FGSC A1164 / JCM 1740 / NRRL 181 / WB 181) (Aspergillus fischerianus).